The following is a 1697-amino-acid chain: SAC3 family protein B (1697 aa).

Disordered regions lie at residues 54 to 134, 167 to 280, 306 to 413, and 491 to 512; these read PPAS…QPGG, QRPN…SRSN, EATR…EQAR, and ESERGERERKGDLDHYERVDGD. The segment covering 120 to 134 has biased composition (low complexity); that stretch reads QNPSPSSGQPYQPGG. Residues 178-192 are compositionally biased toward basic and acidic residues; the sequence is DGSRNFLKDHGEHSR. The span at 193–202 shows a compositional bias: polar residues; that stretch reads ATSPPATSHI. Positions 215-227 are enriched in basic and acidic residues; it reads RSQDSKRKSRSDI. Composition is skewed to polar residues over residues 233-243, 257-280, and 335-380; these read MGFSRRNQSPV, PLSSRTWMRSPSSAENNPVRSRSN, and RFST…SPAT. A PCI domain is found at 625–813; the sequence is NIEQMNKTSV…KCSKLVHMKK (189 aa).

The protein belongs to the SAC3 family. In terms of assembly, interacts with SAC3A, EER5 and CML19. Interacts with UCH1 and UCH2.

The protein localises to the nucleus. Functionally, component of the TREX-2 complex (transcription and export complex 2), a muliprotein complex that functions in docking export-competent ribonucleoprotein particles (mRNPs) to the nuclear entrance of the nuclear pore complex (nuclear basket). TREX-2 participates in mRNA export and accurate chromatin positioning in the nucleus by tethering genes to the nuclear periphery. In Arabidopsis thaliana (Mouse-ear cress), this protein is SAC3 family protein B.